The chain runs to 224 residues: Octanoyltransferase (224 aa).

Residues 38–213 (SATVDELWWV…YLVRRLGYSA (176 aa)) enclose the BPL/LPL catalytic domain. Substrate is bound by residues 77-84 (RGGQVTYH), 144-146 (SLG), and 157-159 (GLS). Cysteine 175 functions as the Acyl-thioester intermediate in the catalytic mechanism.

It belongs to the LipB family.

The protein resides in the cytoplasm. The catalysed reaction is octanoyl-[ACP] + L-lysyl-[protein] = N(6)-octanoyl-L-lysyl-[protein] + holo-[ACP] + H(+). The protein operates within protein modification; protein lipoylation via endogenous pathway; protein N(6)-(lipoyl)lysine from octanoyl-[acyl-carrier-protein]: step 1/2. Functionally, catalyzes the transfer of endogenously produced octanoic acid from octanoyl-acyl-carrier-protein onto the lipoyl domains of lipoate-dependent enzymes. Lipoyl-ACP can also act as a substrate although octanoyl-ACP is likely to be the physiological substrate. In Nitrosococcus oceani (strain ATCC 19707 / BCRC 17464 / JCM 30415 / NCIMB 11848 / C-107), this protein is Octanoyltransferase.